The following is a 205-amino-acid chain: IQ domain-containing protein F1 (205 aa).

Composition is skewed to basic and acidic residues over residues 1–24 and 51–68; these read MEEK…KEMP and ANEK…LSDK. A disordered region spans residues 1 to 68; sequence MEEKQPQKTK…PENQKKLSDK (68 aa). 2 consecutive IQ domains span residues 68-97 and 124-153; these read KDTV…SACI and KEWA…AVRI.

Interacts with calmodulin.

The protein resides in the cytoplasmic vesicle. Its subcellular location is the secretory vesicle. The protein localises to the acrosome. In terms of biological role, involved in sperm capacitation and acrosome reaction. In Homo sapiens (Human), this protein is IQ domain-containing protein F1.